The following is a 390-amino-acid chain: Transforming growth factor beta-1 proprotein (390 aa).

The first 29 residues, 1–29, serve as a signal peptide directing secretion; sequence MPPSGLRLLPLLLPLLWLLVLTPGRPAAG. Positions 30–74 are straightjacket domain; sequence LSTCKTIDMELVKRKRIEAIRGQILSKLRLASPPSQGDVPPGPLP. The segment at 75-271 is arm domain; sequence EAVLALYNST…ATPLERAQHL (197 aa). N-linked (GlcNAc...) asparagine glycans are attached at residues asparagine 82, asparagine 136, and asparagine 176. The interval 226–252 is bowtie tail; sequence DSKDNTLHVEINGFNSGRRGDLATIHG. A Cell attachment site motif is present at residues 244–246; that stretch reads RGD. Cystine bridges form between cysteine 285-cysteine 294, cysteine 293-cysteine 356, cysteine 322-cysteine 387, and cysteine 326-cysteine 389.

Belongs to the TGF-beta family. Homodimer; disulfide-linked. Interacts with the serine proteases, HTRA1 and HTRA3: the interaction with either inhibits TGFB1-mediated signaling and the HTRA protease activity is required for this inhibition. May interact with THSD4; this interaction may lead to sequestration by FBN1 microfibril assembly and attenuation of TGFB signaling. Interacts with CD109, DPT and ASPN. Interacts with EFEMP2. Interacts with TSKU; the interaction contributes to regulation of the hair cycle. Interacts with TGFBR3. In terms of assembly, homodimer; disulfide-linked. Interacts with transforming growth factor beta-1 (TGF-beta-1) chain; interaction is non-covalent and maintains TGF-beta-1 in a latent state; each latency-associated peptide (LAP) monomer interacts with TGF-beta-1 in the other monomer. Interacts with LTBP1; leading to regulation of TGF-beta-1 activation. Interacts with LRRC32/GARP; leading to regulation of TGF-beta-1 activation on the surface of activated regulatory T-cells (Tregs). Interacts with LRRC33/NRROS; leading to regulation of TGF-beta-1 activation in macrophages and microglia. Interacts (via cell attachment site) with integrins ITGAV and ITGB6 (ITGAV:ITGB6), leading to release of the active TGF-beta-1. Interacts with NREP; the interaction results in a decrease in TGFB1 autoinduction. Interacts with HSP90AB1; inhibits latent TGFB1 activation. As to quaternary structure, homodimer; disulfide-linked. Interacts with TGF-beta receptors (TGFBR1 and TGFBR2), leading to signal transduction. Transforming growth factor beta-1 proprotein: The precursor proprotein is cleaved in the Golgi apparatus by FURIN to form Transforming growth factor beta-1 (TGF-beta-1) and Latency-associated peptide (LAP) chains, which remain non-covalently linked, rendering TGF-beta-1 inactive. In terms of processing, N-glycosylated. Deglycosylation leads to activation of Transforming growth factor beta-1 (TGF-beta-1); mechanisms triggering deglycosylation-driven activation of TGF-beta-1 are however unclear.

It localises to the secreted. Its subcellular location is the extracellular space. It is found in the extracellular matrix. Transforming growth factor beta-1 proprotein: Precursor of the Latency-associated peptide (LAP) and Transforming growth factor beta-1 (TGF-beta-1) chains, which constitute the regulatory and active subunit of TGF-beta-1, respectively. Its function is as follows. Required to maintain the Transforming growth factor beta-1 (TGF-beta-1) chain in a latent state during storage in extracellular matrix. Associates non-covalently with TGF-beta-1 and regulates its activation via interaction with 'milieu molecules', such as LTBP1, LRRC32/GARP and LRRC33/NRROS, that control activation of TGF-beta-1. Interaction with LRRC33/NRROS regulates activation of TGF-beta-1 in macrophages and microglia. Interaction with LRRC32/GARP controls activation of TGF-beta-1 on the surface of activated regulatory T-cells (Tregs). Interaction with integrins (ITGAV:ITGB6 or ITGAV:ITGB8) results in distortion of the Latency-associated peptide chain and subsequent release of the active TGF-beta-1. Functionally, multifunctional protein that regulates the growth and differentiation of various cell types and is involved in various processes, such as normal development, immune function, microglia function and responses to neurodegeneration. Activation into mature form follows different steps: following cleavage of the proprotein in the Golgi apparatus, Latency-associated peptide (LAP) and Transforming growth factor beta-1 (TGF-beta-1) chains remain non-covalently linked rendering TGF-beta-1 inactive during storage in extracellular matrix. At the same time, LAP chain interacts with 'milieu molecules', such as LTBP1, LRRC32/GARP and LRRC33/NRROS that control activation of TGF-beta-1 and maintain it in a latent state during storage in extracellular milieus. TGF-beta-1 is released from LAP by integrins (ITGAV:ITGB6 or ITGAV:ITGB8): integrin-binding to LAP stabilizes an alternative conformation of the LAP bowtie tail and results in distortion of the LAP chain and subsequent release of the active TGF-beta-1. Once activated following release of LAP, TGF-beta-1 acts by binding to TGF-beta receptors (TGFBR1 and TGFBR2), which transduce signal. While expressed by many cells types, TGF-beta-1 only has a very localized range of action within cell environment thanks to fine regulation of its activation by Latency-associated peptide chain (LAP) and 'milieu molecules'. Plays an important role in bone remodeling: acts as a potent stimulator of osteoblastic bone formation, causing chemotaxis, proliferation and differentiation in committed osteoblasts. Can promote either T-helper 17 cells (Th17) or regulatory T-cells (Treg) lineage differentiation in a concentration-dependent manner. At high concentrations, leads to FOXP3-mediated suppression of RORC and down-regulation of IL-17 expression, favoring Treg cell development. At low concentrations in concert with IL-6 and IL-21, leads to expression of the IL-17 and IL-23 receptors, favoring differentiation to Th17 cells. Stimulates sustained production of collagen through the activation of CREB3L1 by regulated intramembrane proteolysis (RIP). Mediates SMAD2/3 activation by inducing its phosphorylation and subsequent translocation to the nucleus. Positively regulates odontoblastic differentiation in dental papilla cells, via promotion of IPO7-mediated translocation of phosphorylated SMAD2 to the nucleus and subsequent transcription of target genes. Can induce epithelial-to-mesenchymal transition (EMT) and cell migration in various cell types. The polypeptide is Transforming growth factor beta-1 proprotein (TGFB1) (Sus scrofa (Pig)).